A 392-amino-acid chain; its full sequence is L-lactate dehydrogenase (392 aa).

Positions 1–380 constitute an FMN hydroxy acid dehydrogenase domain; sequence MIISASTDYR…GSDSLVTGSA (380 aa). Tyr24 lines the substrate pocket. FMN contacts are provided by Ser106 and Gln127. Tyr129 lines the substrate pocket. Thr155 lines the FMN pocket. Residue Arg164 participates in substrate binding. Residue Lys251 participates in FMN binding. The active-site Proton acceptor is His275. Arg278 serves as a coordination point for substrate. Residue 306-330 coordinates FMN; it reads DSGVRNGLDVVRMIAMGADTILLGR.

It belongs to the FMN-dependent alpha-hydroxy acid dehydrogenase family. FMN serves as cofactor.

It localises to the cell inner membrane. The catalysed reaction is (S)-lactate + A = pyruvate + AH2. In terms of biological role, catalyzes the conversion of L-lactate to pyruvate. Is coupled to the respiratory chain. The chain is L-lactate dehydrogenase from Chromohalobacter salexigens (strain ATCC BAA-138 / DSM 3043 / CIP 106854 / NCIMB 13768 / 1H11).